The chain runs to 689 residues: Putative pentatricopeptide repeat-containing protein At3g15130 (689 aa).

PPR repeat units follow at residues 5–39, 40–70, 71–105, 106–140, 141–171, 172–206, 209–243, 246–276, 277–311, 312–342, 347–377, 378–412, 413–448, and 449–479; these read QRQN…GSGL, NLIT…MPER, NVVS…GIYP, NEFT…GFEM, MVEV…IVDR, SLIS…NIKE, DEFT…GFHC, SATI…IKEK, TMIS…NSQI, DSFA…AVKL, ETSV…MQLK, DVIS…NIEP, DEVC…GIKP, and RVEH…MPIK. Residues 484–559 form a type E motif region; it reads IWQTLLSLCR…EAGMSWVEIE (76 aa). The type E(+) motif stretch occupies residues 560-590; that stretch reads REVHFFRSGEDSHPLTPVIQETLKEAERRLR. The segment at 592-689 is type DYW motif; that stretch reads ELGYVYGLKH…DGCCSCGDYW (98 aa).

It belongs to the PPR family. PCMP-H subfamily.

The protein is Putative pentatricopeptide repeat-containing protein At3g15130 (PCMP-H86) of Arabidopsis thaliana (Mouse-ear cress).